The sequence spans 273 residues: MHDANIRVAIAGAGGRMGRQLIQAALALEGVQLGAALEREGSSLLGSDAGELAGAGKTGVTVQSSLDAVKDDFDVFIDFTRPEGTLNHLAFCRQHGKGMVIGTTGFDEAGKQAIRDAAADIAIVFAANFSVGVNVMLKLLEKAAKVMGDYTDIEIIEAHHRHKVDAPSGTALAMGEAIAHALDKDLKDCAVYSREGHTGERVPGTIGFATVRAGDIVGEHTAMFADIGERLEITHKASSRMTFANGAVRSALWLSGKESGLFDMRDVLDLNSL.

NAD(+)-binding positions include G12–M17 and E38. R39 contributes to the NADP(+) binding site. NAD(+)-binding positions include G102–T104 and A126–F129. H159 acts as the Proton donor/acceptor in catalysis. Residue H160 participates in (S)-2,3,4,5-tetrahydrodipicolinate binding. K163 (proton donor) is an active-site residue. G169–T170 contacts (S)-2,3,4,5-tetrahydrodipicolinate.

This sequence belongs to the DapB family. As to quaternary structure, homotetramer.

The protein localises to the cytoplasm. The enzyme catalyses (S)-2,3,4,5-tetrahydrodipicolinate + NAD(+) + H2O = (2S,4S)-4-hydroxy-2,3,4,5-tetrahydrodipicolinate + NADH + H(+). It catalyses the reaction (S)-2,3,4,5-tetrahydrodipicolinate + NADP(+) + H2O = (2S,4S)-4-hydroxy-2,3,4,5-tetrahydrodipicolinate + NADPH + H(+). The protein operates within amino-acid biosynthesis; L-lysine biosynthesis via DAP pathway; (S)-tetrahydrodipicolinate from L-aspartate: step 4/4. Catalyzes the conversion of 4-hydroxy-tetrahydrodipicolinate (HTPA) to tetrahydrodipicolinate. This Escherichia coli O139:H28 (strain E24377A / ETEC) protein is 4-hydroxy-tetrahydrodipicolinate reductase.